A 333-amino-acid chain; its full sequence is Glycerol-3-phosphate dehydrogenase [NAD(P)+] (333 aa).

NADPH contacts are provided by serine 10, phenylalanine 11, arginine 31, and lysine 105. The sn-glycerol 3-phosphate site is built by lysine 105, glycine 136, and serine 138. Alanine 140 lines the NADPH pocket. Residues lysine 191, aspartate 244, serine 254, arginine 255, and asparagine 256 each contribute to the sn-glycerol 3-phosphate site. The active-site Proton acceptor is the lysine 191. An NADPH-binding site is contributed by arginine 255. Valine 279 and glutamate 281 together coordinate NADPH.

This sequence belongs to the NAD-dependent glycerol-3-phosphate dehydrogenase family.

It localises to the cytoplasm. It catalyses the reaction sn-glycerol 3-phosphate + NAD(+) = dihydroxyacetone phosphate + NADH + H(+). The catalysed reaction is sn-glycerol 3-phosphate + NADP(+) = dihydroxyacetone phosphate + NADPH + H(+). It functions in the pathway membrane lipid metabolism; glycerophospholipid metabolism. Functionally, catalyzes the reduction of the glycolytic intermediate dihydroxyacetone phosphate (DHAP) to sn-glycerol 3-phosphate (G3P), the key precursor for phospholipid synthesis. This chain is Glycerol-3-phosphate dehydrogenase [NAD(P)+], found in Leptospira biflexa serovar Patoc (strain Patoc 1 / Ames).